A 79-amino-acid polypeptide reads, in one-letter code: Small ribosomal subunit protein bS18 (79 aa).

This sequence belongs to the bacterial ribosomal protein bS18 family. In terms of assembly, part of the 30S ribosomal subunit. Forms a tight heterodimer with protein bS6.

Functionally, binds as a heterodimer with protein bS6 to the central domain of the 16S rRNA, where it helps stabilize the platform of the 30S subunit. This Blochmanniella pennsylvanica (strain BPEN) protein is Small ribosomal subunit protein bS18.